Reading from the N-terminus, the 3241-residue chain is PHD finger protein rhinoceros (3241 aa).

Basic residues predominate over residues 1–16 (MSQRGKRGNQQHHQSH). Residues 1–126 (MSQRGKRGNQ…GASSSSSWQA (126 aa)) form a disordered region. Composition is skewed to low complexity over residues 42-55 (PPNG…AEVT) and 90-126 (RAAA…SWQA). The PHD-type 1 zinc finger occupies 312–362 (NVICDVCRSPDSEEANEMVFCDNCNICVHQACYGITAIPSGQWLCRTCSMG). Residues 364–398 (KPDCVLCPNKGGAMKSNKSGKHWAHVSCALWIPEV) form a C2HC pre-PHD-type zinc finger. A PHD-type 2 zinc finger spans residues 422–481 (LICVLCRKRVGSCIQCSVKPCKTAYHVTCAFQHGLEMRAIIEEGNAEDGVKLRSYCQKHS). Disordered stretches follow at residues 482–501 (MSKG…ASVA), 508–554 (NRYG…ARAQ), 737–1266 (SGKQ…VATP), 1279–1483 (PQRQ…STKV), 1500–1613 (PKTN…SETR), and 1632–1746 (NLGA…QHLL). A compositionally biased stretch (basic and acidic residues) spans 540–554 (KTELTSEERNQARAQ). Over residues 762 to 777 (KKLNNGILSSRTSSPE) the composition is skewed to polar residues. Residues 807–874 (KSSAAAATST…SGSSSAGSGV (68 aa)) are compositionally biased toward low complexity. Over residues 931-943 (ERCRNRQEPERGA) the composition is skewed to basic and acidic residues. Residues 949 to 965 (QSKSVPNRSQASRSKPT) are compositionally biased toward polar residues. Residues 995–1007 (DADESVSSDESEE) show a composition bias toward acidic residues. Over residues 1019–1031 (STTTSGLATTGSA) the composition is skewed to low complexity. Residues 1060–1075 (TVESNVSDSQNQQTIR) are compositionally biased toward polar residues. The span at 1087 to 1104 (TAATTSSTSQAASSTSKA) shows a compositional bias: low complexity. Composition is skewed to polar residues over residues 1117-1126 (IGNSTKTKPN) and 1151-1163 (NMRS…TLQP). Over residues 1184–1211 (KVKDSSSRVSNEADKSSLEKVRPKEHLQ) the composition is skewed to basic and acidic residues. Residues 1313–1327 (VTSATISGSGSSVPA) are compositionally biased toward polar residues. Phosphothreonine is present on T1346. A Phosphoserine modification is found at S1352. T1364 bears the Phosphothreonine mark. Low complexity predominate over residues 1382 to 1426 (SSSSSGDSESSSSSSSSGSSSSSGGSDSDSESQASNSENPSSREP). Residue T1456 is modified to Phosphothreonine. Over residues 1463-1483 (NVLNIPSTRSRQNSTTKSTKV) the composition is skewed to polar residues. A compositionally biased stretch (basic and acidic residues) spans 1541 to 1558 (SPEKTVSRCKSRAEESPK). Over residues 1576-1594 (KGTSSLDKLLNKKQQQMNH) the composition is skewed to polar residues. The span at 1599–1608 (TPPPISPTPP) shows a compositional bias: pro residues. Residues 1664–1675 (TAPTRTQLSASA) are compositionally biased toward polar residues. Residues 1688–1699 (PAAPLPASPTPT) are compositionally biased toward pro residues. The segment covering 1717–1731 (RRMRWRSRRRRRRRS) has biased composition (basic residues). Coiled coils occupy residues 1741–1770 (HTQH…ASKY) and 1893–1925 (SEED…KEAV). Disordered stretches follow at residues 2037–2061 (LEKS…GQPA), 2124–2148 (AERR…PVVT), 2203–2227 (NNTN…TPNN), 2346–2454 (TPPV…GGVT), 2598–2629 (ATGT…PAPN), 2667–2691 (SEEV…ARSQ), 2768–2811 (NDDS…NSSS), 2832–2911 (GAGA…SVDE), 2964–3015 (NKRG…TTTM), 3042–3169 (KAET…EAAM), and 3184–3241 (VNVG…CEVR). Polar residues predominate over residues 2359 to 2381 (KRTSVSGSNLSKKQTHKSPQLPQ). Residues 2392 to 2402 (PLQPPTPPAPV) show a composition bias toward pro residues. Residues 2430–2439 (GSGGSGAPGR) show a composition bias toward gly residues. 2 stretches are compositionally biased toward polar residues: residues 2598 to 2611 (ATGT…QHSG) and 2673 to 2689 (DSDS…SDAR). Polar residues predominate over residues 2855 to 2865 (NNDNNGKTGAA). Residues 2876–2887 (KTLESSEDDHQA) are compositionally biased toward basic and acidic residues. Residues S2880 and S2881 each carry the phosphoserine modification. Positions 2899–2911 (ANETPSGVSSVDE) are enriched in polar residues. The segment covering 2964-2974 (NKRGVVVKDGE) has biased composition (basic and acidic residues). Positions 2984 to 3002 (KRPKSSKPKKEKKEKKRQK) are enriched in basic residues. Residues 3003-3015 (QQQLILSSSTTTM) are compositionally biased toward low complexity. S3104 and S3110 each carry phosphoserine. Composition is skewed to polar residues over residues 3115 to 3130 (LLNS…NTSP) and 3184 to 3197 (VNVG…NSLP). Positions 3198 to 3218 (SASGTGSASSNSCNSNSINNN) are enriched in low complexity. The segment covering 3219-3230 (GSGGGRASGEGG) has biased composition (gly residues).

This sequence belongs to the JADE family.

It localises to the nucleus. Its function is as follows. May function as a negative regulator of the EGFR/Ras/MAPK signaling pathway during eye development. This chain is PHD finger protein rhinoceros (rno), found in Drosophila melanogaster (Fruit fly).